We begin with the raw amino-acid sequence, 242 residues long: Lysosomal membrane ascorbate-dependent ferrireductase CYB561A3 (242 aa).

At 1–7 the chain is on the cytoplasmic side; that stretch reads MVSGRFY. The chain crosses the membrane as a helical span at residues 8–28; sequence LSCLLLGSLGSMCILFTIYWM. The region spanning 12–219 is the Cytochrome b561 domain; sequence LLGSLGSMCI…FGLLVLYILL (208 aa). Over 29–45 the chain is Lumenal; the sequence is QYWRGGFAWNGSIYMFN. Asn38 carries N-linked (GlcNAc...) asparagine glycosylation. The helical transmembrane segment at 46–66 threads the bilayer; that stretch reads WHPVLMVAGMVVFYGGASLVY. Residues His47 and Arg67 each contribute to the heme b site. Over 67–83 the chain is Cytoplasmic; sequence RLPQSWVGPKLPWKLLH. L-ascorbate-binding residues include Lys76 and Lys80. His83 is a binding site for heme b. A helical transmembrane segment spans residues 84 to 104; it reads AALHLMAFVLTVVGLVAVFTF. At 105–119 the chain is on the lumenal side; that stretch reads HNHGRTANLYSLHSW. Residues 112 to 115 and His117 each bind heme b; that span reads NLYS. The helical transmembrane segment at 120 to 140 threads the bilayer; that stretch reads LGITTVFLFACQWFLGFAVFL. Residues 141–154 lie on the Cytoplasmic side of the membrane; sequence LPWASMWLRSLLKP. Arg149 contacts L-ascorbate. Residues 155 to 175 traverse the membrane as a helical segment; it reads IHVFFGAAILSLSIASVISGI. Heme b contacts are provided by His156 and Glu177. The Lumenal segment spans residues 176–202; sequence NEKLFFSLKNTTRPYHSLPSEAVFANS. Residues 203–223 traverse the membrane as a helical segment; that stretch reads TGMLVVAFGLLVLYILLASSW. Heme b is bound at residue Lys224. The Cytoplasmic portion of the chain corresponds to 224-242; the sequence is KRPEPGILTDRQPLLHDGE.

Homodimer. It depends on heme b as a cofactor. In terms of processing, N-glycosylated.

The protein localises to the late endosome membrane. Its subcellular location is the lysosome membrane. The catalysed reaction is Fe(3+)(out) + L-ascorbate(in) = monodehydro-L-ascorbate radical(in) + Fe(2+)(out) + H(+). Transmembrane reductase that uses ascorbate as an electron donor in the cytoplasm and transfers electrons across membranes to reduce iron cations Fe(3+) into Fe(2+) in the lumen of the late endosome and lysosome. Reduced iron can then be extruded from the late endosome and lysosome to the cytoplasm by divalent metal-specific transporters. It is therefore most probably involved in endosomal and lysosomal cellular iron homeostasis. This chain is Lysosomal membrane ascorbate-dependent ferrireductase CYB561A3, found in Homo sapiens (Human).